The sequence spans 357 residues: RNA-binding protein 43 (357 aa).

One can recognise an RRM domain in the interval 15–104; that stretch reads RTVVVAGLPV…VSLRVSHFGD (90 aa).

In Homo sapiens (Human), this protein is RNA-binding protein 43 (RBM43).